The following is a 391-amino-acid chain: Arginine biosynthesis bifunctional protein ArgJ 2 (391 aa).

Positions 167 and 180 each coordinate substrate. The active-site Nucleophile is S180.

The protein belongs to the ArgJ family. Heterotetramer of two alpha and two beta chains.

The protein localises to the cytoplasm. It catalyses the reaction N(2)-acetyl-L-ornithine + L-glutamate = N-acetyl-L-glutamate + L-ornithine. It carries out the reaction L-glutamate + acetyl-CoA = N-acetyl-L-glutamate + CoA + H(+). Its pathway is amino-acid biosynthesis; L-arginine biosynthesis; L-ornithine and N-acetyl-L-glutamate from L-glutamate and N(2)-acetyl-L-ornithine (cyclic): step 1/1. It participates in amino-acid biosynthesis; L-arginine biosynthesis; N(2)-acetyl-L-ornithine from L-glutamate: step 1/4. In terms of biological role, catalyzes two activities which are involved in the cyclic version of arginine biosynthesis: the synthesis of N-acetylglutamate from glutamate and acetyl-CoA as the acetyl donor, and of ornithine by transacetylation between N(2)-acetylornithine and glutamate. This chain is Arginine biosynthesis bifunctional protein ArgJ 2, found in Streptomyces clavuligerus.